The following is a 144-amino-acid chain: Neuritin-B (144 aa).

Positions Met1–Ala27 are cleaved as a signal peptide. Ser114 is lipidated: GPI-anchor amidated serine. Residues Thr115–Gln144 constitute a propeptide, removed in mature form.

Belongs to the neuritin family.

The protein resides in the cell membrane. Functionally, modulates postsynaptic dendritic arbor elaboration and synaptic maturation. The protein is Neuritin-B (nrn1-b) of Xenopus laevis (African clawed frog).